The chain runs to 476 residues: Sulfate adenylyltransferase subunit 1 (476 aa).

Residues 24 to 239 (KSLLRFLTCG…LLETVDVDHE (216 aa)) form the tr-type G domain. The segment at 33–40 (GSVDDGKS) is G1. 33 to 40 (GSVDDGKS) provides a ligand contact to GTP. Residues 91 to 95 (GITID) form a G2 region. The G3 stretch occupies residues 112–115 (DTPG). GTP-binding positions include 112-116 (DTPGH) and 167-170 (NKMD). The tract at residues 167–170 (NKMD) is G4. The G5 stretch occupies residues 205 to 207 (SAL).

It belongs to the TRAFAC class translation factor GTPase superfamily. Classic translation factor GTPase family. CysN/NodQ subfamily. Heterodimer composed of CysD, the smaller subunit, and CysN.

It catalyses the reaction sulfate + ATP + H(+) = adenosine 5'-phosphosulfate + diphosphate. The protein operates within sulfur metabolism; hydrogen sulfide biosynthesis; sulfite from sulfate: step 1/3. With CysD forms the ATP sulfurylase (ATPS) that catalyzes the adenylation of sulfate producing adenosine 5'-phosphosulfate (APS) and diphosphate, the first enzymatic step in sulfur assimilation pathway. APS synthesis involves the formation of a high-energy phosphoric-sulfuric acid anhydride bond driven by GTP hydrolysis by CysN coupled to ATP hydrolysis by CysD. The sequence is that of Sulfate adenylyltransferase subunit 1 from Vibrio campbellii (strain ATCC BAA-1116).